The chain runs to 148 residues: Endoribonuclease YbeY (148 aa).

The Zn(2+) site is built by His-113, His-117, and His-123.

Belongs to the endoribonuclease YbeY family. Zn(2+) is required as a cofactor.

The protein resides in the cytoplasm. Its function is as follows. Single strand-specific metallo-endoribonuclease involved in late-stage 70S ribosome quality control and in maturation of the 3' terminus of the 16S rRNA. The chain is Endoribonuclease YbeY from Borrelia hermsii (strain HS1 / DAH).